A 430-amino-acid polypeptide reads, in one-letter code: Serine--tRNA ligase (430 aa).

Residues Ala47 to Asp66 are disordered. Thr231–Glu233 is a binding site for L-serine. Arg262–Glu264 provides a ligand contact to ATP. Glu285 serves as a coordination point for L-serine. An ATP-binding site is contributed by Glu349–Ser352. Ser385 provides a ligand contact to L-serine.

Belongs to the class-II aminoacyl-tRNA synthetase family. Type-1 seryl-tRNA synthetase subfamily. As to quaternary structure, homodimer. The tRNA molecule binds across the dimer.

Its subcellular location is the cytoplasm. The catalysed reaction is tRNA(Ser) + L-serine + ATP = L-seryl-tRNA(Ser) + AMP + diphosphate + H(+). The enzyme catalyses tRNA(Sec) + L-serine + ATP = L-seryl-tRNA(Sec) + AMP + diphosphate + H(+). The protein operates within aminoacyl-tRNA biosynthesis; selenocysteinyl-tRNA(Sec) biosynthesis; L-seryl-tRNA(Sec) from L-serine and tRNA(Sec): step 1/1. Its function is as follows. Catalyzes the attachment of serine to tRNA(Ser). Is also able to aminoacylate tRNA(Sec) with serine, to form the misacylated tRNA L-seryl-tRNA(Sec), which will be further converted into selenocysteinyl-tRNA(Sec). The polypeptide is Serine--tRNA ligase (Paracoccus denitrificans (strain Pd 1222)).